The sequence spans 165 residues: UPF0303 protein Bcenmc03_1534 (165 aa).

It belongs to the UPF0303 family.

The sequence is that of UPF0303 protein Bcenmc03_1534 from Burkholderia orbicola (strain MC0-3).